The following is an 804-amino-acid chain: Phenylalanine--tRNA ligase beta subunit (804 aa).

The region spanning 39–147 is the tRNA-binding domain; it reads GPSFSNVVVA…PNLPLGEDLA (109 aa). One can recognise a B5 domain in the interval 402-480; the sequence is ETVGEIHLRC…RIHGYDNIPV (79 aa). Asp458, Asp464, Glu467, and Glu468 together coordinate Mg(2+). Positions 711-804 constitute an FDX-ACB domain; the sequence is SRYPESSRDV…IIDQTGARVR (94 aa).

It belongs to the phenylalanyl-tRNA synthetase beta subunit family. Type 1 subfamily. In terms of assembly, tetramer of two alpha and two beta subunits. Mg(2+) serves as cofactor.

The protein resides in the cytoplasm. The enzyme catalyses tRNA(Phe) + L-phenylalanine + ATP = L-phenylalanyl-tRNA(Phe) + AMP + diphosphate + H(+). This is Phenylalanine--tRNA ligase beta subunit from Syntrophus aciditrophicus (strain SB).